The primary structure comprises 779 residues: Probable ATP-dependent RNA helicase DHX40 (779 aa).

The tract at residues 1–53 is disordered; sequence MSRFPAVAGRAPRRQEEGERSRDLQEERPSAVCIADREEKGCTSQEGGTTPTF. Positions 13–41 are enriched in basic and acidic residues; sequence RRQEEGERSRDLQEERPSAVCIADREEKG. Over residues 42–53 the composition is skewed to polar residues; sequence CTSQEGGTTPTF. The Helicase ATP-binding domain maps to 63–231; sequence IQAVRDNSFL…FGNCPIFDIP (169 aa). 76–83 serves as a coordination point for ATP; it reads GNTGSGKT. The DEAH box motif lies at 173 to 176; the sequence is DEAH. Residues 263–442 enclose the Helicase C-terminal domain; it reads TMDIHLNEMA…SVVLTLKCLA (180 aa). Residues 737-779 form a disordered region; that stretch reads SKDVLKKMQRRNDDKSISDARARFLERKQQRTQDHSDTRKETG.

The protein belongs to the DEAD box helicase family. DEAH subfamily.

It carries out the reaction ATP + H2O = ADP + phosphate + H(+). In terms of biological role, probable ATP-dependent RNA helicase. The protein is Probable ATP-dependent RNA helicase DHX40 (DHX40) of Pongo abelii (Sumatran orangutan).